The following is a 66-amino-acid chain: Large ribosomal subunit protein bL35 (66 aa).

Positions 1 to 16 are enriched in basic residues; the sequence is MPKQKTHRASAKRFKR. The tract at residues 1–21 is disordered; it reads MPKQKTHRASAKRFKRTGNGG.

It belongs to the bacterial ribosomal protein bL35 family.

This is Large ribosomal subunit protein bL35 from Lactococcus lactis subsp. cremoris (strain MG1363).